The primary structure comprises 66 residues: Large ribosomal subunit protein bL35 (66 aa).

The span at 1–15 (MPKMKTKSSAKKRFK) shows a compositional bias: basic residues. Residues 1-32 (MPKMKTKSSAKKRFKMTATGKVRAGQAGKRHG) are disordered.

It belongs to the bacterial ribosomal protein bL35 family.

This is Large ribosomal subunit protein bL35 from Dinoroseobacter shibae (strain DSM 16493 / NCIMB 14021 / DFL 12).